The chain runs to 752 residues: Multifunctional tryptophan biosynthesis protein (752 aa).

Positions 3–202 (FTLLIDNYDS…IQMKGGKWGG (200 aa)) constitute a Glutamine amidotransferase type-1 domain. 58–60 (GPG) provides a ligand contact to L-glutamine. The active-site Nucleophile; for GATase activity is the Cys86. Position 136–137 (136–137 (SL)) interacts with L-glutamine. Active-site for GATase activity residues include His176 and Glu178. The interval 231-495 (ILNRIHAQRL…DTKAFLRSLI (265 aa)) is indole-3-glycerol phosphate synthase. The segment at 509–752 (LVKICGIRST…VEAFVKAVRG (244 aa)) is N-(5'-phosphoribosyl)anthranilate isomerase.

It catalyses the reaction N-(5-phospho-beta-D-ribosyl)anthranilate = 1-(2-carboxyphenylamino)-1-deoxy-D-ribulose 5-phosphate. It carries out the reaction 1-(2-carboxyphenylamino)-1-deoxy-D-ribulose 5-phosphate + H(+) = (1S,2R)-1-C-(indol-3-yl)glycerol 3-phosphate + CO2 + H2O. The catalysed reaction is chorismate + L-glutamine = anthranilate + pyruvate + L-glutamate + H(+). The protein operates within amino-acid biosynthesis; L-tryptophan biosynthesis; L-tryptophan from chorismate: step 1/5. Its pathway is amino-acid biosynthesis; L-tryptophan biosynthesis; L-tryptophan from chorismate: step 3/5. It participates in amino-acid biosynthesis; L-tryptophan biosynthesis; L-tryptophan from chorismate: step 4/5. Functionally, trifunctional enzyme bearing the Gln amidotransferase (GATase) domain of anthranilate synthase, indole-glycerolphosphate synthase, and phosphoribosylanthranilate isomerase activities. The protein is Multifunctional tryptophan biosynthesis protein (TRP1) of Cryptococcus neoformans var. neoformans serotype D (strain JEC21 / ATCC MYA-565) (Filobasidiella neoformans).